We begin with the raw amino-acid sequence, 419 residues long: Glutamate-1-semialdehyde 2,1-aminomutase (419 aa).

An N6-(pyridoxal phosphate)lysine modification is found at lysine 259.

This sequence belongs to the class-III pyridoxal-phosphate-dependent aminotransferase family. HemL subfamily. It depends on pyridoxal 5'-phosphate as a cofactor.

The protein localises to the cytoplasm. It carries out the reaction (S)-4-amino-5-oxopentanoate = 5-aminolevulinate. It functions in the pathway porphyrin-containing compound metabolism; protoporphyrin-IX biosynthesis; 5-aminolevulinate from L-glutamyl-tRNA(Glu): step 2/2. This chain is Glutamate-1-semialdehyde 2,1-aminomutase (hemL), found in Sulfurisphaera tokodaii (strain DSM 16993 / JCM 10545 / NBRC 100140 / 7) (Sulfolobus tokodaii).